Consider the following 1024-residue polypeptide: Beta-galactosidase (1024 aa).

Residues Asn103 and Asp202 each contribute to the substrate site. Asp202 contributes to the Na(+) binding site. 3 residues coordinate Mg(2+): Glu417, His419, and Glu462. Residues Glu462 and 538–541 contribute to the substrate site; that span reads EYAH. Residue Glu462 is the Proton donor of the active site. Glu538 functions as the Nucleophile in the catalytic mechanism. Residue Asn598 participates in Mg(2+) binding. Residues Phe602 and Asn605 each coordinate Na(+). Substrate is bound by residues Asn605 and Trp1000.

Belongs to the glycosyl hydrolase 2 family. Homotetramer. Mg(2+) is required as a cofactor. It depends on Na(+) as a cofactor.

It carries out the reaction Hydrolysis of terminal non-reducing beta-D-galactose residues in beta-D-galactosides.. The chain is Beta-galactosidase from Escherichia coli (strain UTI89 / UPEC).